Here is a 447-residue protein sequence, read N- to C-terminus: Tubulin beta-2 chain (447 aa).

The GTP site is built by Gln11, Glu69, Ser138, Gly142, Thr143, Gly144, Asn204, and Asn226. Glu69 is a binding site for Mg(2+). Positions Val419–Asp447 are disordered. Residues Thr429–Asp447 are compositionally biased toward acidic residues.

This sequence belongs to the tubulin family. In terms of assembly, dimer of alpha and beta chains. A typical microtubule is a hollow water-filled tube with an outer diameter of 25 nm and an inner diameter of 15 nM. Alpha-beta heterodimers associate head-to-tail to form protofilaments running lengthwise along the microtubule wall with the beta-tubulin subunit facing the microtubule plus end conferring a structural polarity. Microtubules usually have 13 protofilaments but different protofilament numbers can be found in some organisms and specialized cells. Mg(2+) serves as cofactor. In terms of tissue distribution, expressed in leaf sheaths and suspension cultured cells.

Its subcellular location is the cytoplasm. The protein localises to the cytoskeleton. Its function is as follows. Tubulin is the major constituent of microtubules, a cylinder consisting of laterally associated linear protofilaments composed of alpha- and beta-tubulin heterodimers. Microtubules grow by the addition of GTP-tubulin dimers to the microtubule end, where a stabilizing cap forms. Below the cap, tubulin dimers are in GDP-bound state, owing to GTPase activity of alpha-tubulin. This Oryza sativa subsp. japonica (Rice) protein is Tubulin beta-2 chain (TUBB2).